Consider the following 443-residue polypeptide: Light-independent protochlorophyllide reductase subunit N (443 aa).

[4Fe-4S] cluster contacts are provided by C15, C40, and C99.

Belongs to the BchN/ChlN family. As to quaternary structure, protochlorophyllide reductase is composed of three subunits; BchL, BchN and BchB. Forms a heterotetramer of two BchB and two BchN subunits. [4Fe-4S] cluster serves as cofactor.

The catalysed reaction is chlorophyllide a + oxidized 2[4Fe-4S]-[ferredoxin] + 2 ADP + 2 phosphate = protochlorophyllide a + reduced 2[4Fe-4S]-[ferredoxin] + 2 ATP + 2 H2O. The protein operates within porphyrin-containing compound metabolism; bacteriochlorophyll biosynthesis (light-independent). In terms of biological role, component of the dark-operative protochlorophyllide reductase (DPOR) that uses Mg-ATP and reduced ferredoxin to reduce ring D of protochlorophyllide (Pchlide) to form chlorophyllide a (Chlide). This reaction is light-independent. The NB-protein (BchN-BchB) is the catalytic component of the complex. The polypeptide is Light-independent protochlorophyllide reductase subunit N (Heliobacterium modesticaldum (strain ATCC 51547 / Ice1)).